The sequence spans 448 residues: tRNA modification GTPase MnmE (448 aa).

(6S)-5-formyl-5,6,7,8-tetrahydrofolate contacts are provided by Arg-21, Glu-80, and Lys-119. Residues 215–370 (GVKLAIVGRP…LSEEILKKVG (156 aa)) enclose the TrmE-type G domain. A K(+)-binding site is contributed by Asn-225. GTP is bound by residues 225–230 (NVGKSS), 244–250 (TDIAGTT), and 269–272 (DTAG). Ser-229 provides a ligand contact to Mg(2+). Residues Thr-244, Ile-246, and Thr-249 each contribute to the K(+) site. Residue Thr-250 participates in Mg(2+) binding. Lys-448 provides a ligand contact to (6S)-5-formyl-5,6,7,8-tetrahydrofolate.

Belongs to the TRAFAC class TrmE-Era-EngA-EngB-Septin-like GTPase superfamily. TrmE GTPase family. As to quaternary structure, homodimer. Heterotetramer of two MnmE and two MnmG subunits. K(+) is required as a cofactor.

It localises to the cytoplasm. Exhibits a very high intrinsic GTPase hydrolysis rate. Involved in the addition of a carboxymethylaminomethyl (cmnm) group at the wobble position (U34) of certain tRNAs, forming tRNA-cmnm(5)s(2)U34. In Aquifex aeolicus (strain VF5), this protein is tRNA modification GTPase MnmE.